Reading from the N-terminus, the 89-residue chain is Signal recognition particle 19 kDa protein (89 aa).

Belongs to the SRP19 family. As to quaternary structure, part of the signal recognition particle protein translocation system, which is composed of SRP and FtsY. Archaeal SRP consists of a 7S RNA molecule of 300 nucleotides and two protein subunits: SRP54 and SRP19.

The protein localises to the cytoplasm. Its function is as follows. Involved in targeting and insertion of nascent membrane proteins into the cytoplasmic membrane. Binds directly to 7S RNA and mediates binding of the 54 kDa subunit of the SRP. This Methanococcus vannielii (strain ATCC 35089 / DSM 1224 / JCM 13029 / OCM 148 / SB) protein is Signal recognition particle 19 kDa protein.